A 136-amino-acid polypeptide reads, in one-letter code: UPF0216 protein PF0452 (136 aa).

Belongs to the UPF0216 family.

The protein is UPF0216 protein PF0452 of Pyrococcus furiosus (strain ATCC 43587 / DSM 3638 / JCM 8422 / Vc1).